Here is a 198-residue protein sequence, read N- to C-terminus: Protein C4 (198 aa).

A disordered region spans residues 1–36; sequence MFNPRHPGGEFFGRKHHRRHAPDGRSSSSSSSSSEC.

The protein is Protein C4 (C4) of Giardia intestinalis (Giardia lamblia).